A 354-amino-acid chain; its full sequence is Small ribosomal subunit biogenesis GTPase RsgA 1 (354 aa).

Over residues 1-24 the composition is skewed to basic residues; the sequence is MAKKKKLTKGQVRRVRSNQQKRLK. Residues 1-28 are disordered; that stretch reads MAKKKKLTKGQVRRVRSNQQKRLKKQEE. The 162-residue stretch at 113-274 folds into the CP-type G domain; sequence YDGLKPVAAN…LIDSPGVREF (162 aa). GTP-binding positions include 160–163 and 214–222; these read NKVD and GQSGVGKSS. Zn(2+) contacts are provided by cysteine 298, cysteine 303, histidine 305, and cysteine 311.

Belongs to the TRAFAC class YlqF/YawG GTPase family. RsgA subfamily. In terms of assembly, monomer. Associates with 30S ribosomal subunit, binds 16S rRNA. The cofactor is Zn(2+).

Its subcellular location is the cytoplasm. One of several proteins that assist in the late maturation steps of the functional core of the 30S ribosomal subunit. Helps release RbfA from mature subunits. May play a role in the assembly of ribosomal proteins into the subunit. Circularly permuted GTPase that catalyzes slow GTP hydrolysis, GTPase activity is stimulated by the 30S ribosomal subunit. This chain is Small ribosomal subunit biogenesis GTPase RsgA 1, found in Vibrio parahaemolyticus serotype O3:K6 (strain RIMD 2210633).